The sequence spans 445 residues: GTPase Der (445 aa).

EngA-type G domains lie at Pro-3–Gln-167 and Ile-180–Met-353. Residues Gly-9–Ser-16, Asp-56–Phe-60, Asn-119–Glu-122, Gly-186–Ser-193, Asp-233–Leu-237, and Asn-298–Asp-301 each bind GTP. A KH-like domain is found at Ala-354–Asn-438.

Belongs to the TRAFAC class TrmE-Era-EngA-EngB-Septin-like GTPase superfamily. EngA (Der) GTPase family. As to quaternary structure, associates with the 50S ribosomal subunit.

Its function is as follows. GTPase that plays an essential role in the late steps of ribosome biogenesis. This chain is GTPase Der, found in Burkholderia lata (strain ATCC 17760 / DSM 23089 / LMG 22485 / NCIMB 9086 / R18194 / 383).